The sequence spans 59 residues: Single-pass membrane and coiled-coil domain-containing protein 4 (59 aa).

The tract at residues 1–23 is disordered; that stretch reads MRQLKGKPKKETSKDKRERKQAM. The span at 9–23 shows a compositional bias: basic and acidic residues; that stretch reads KKETSKDKRERKQAM. Positions 9 to 30 form a coiled coil; that stretch reads KKETSKDKRERKQAMQDARKQV. A helical transmembrane segment spans residues 32-52; the sequence is TVVLPTVAVVVLLIVFFVYAA.

This sequence belongs to the SMCO4 family.

It localises to the membrane. The chain is Single-pass membrane and coiled-coil domain-containing protein 4 (smco4) from Takifugu rubripes (Japanese pufferfish).